Reading from the N-terminus, the 195-residue chain is Glycine-rich protein A3 (195 aa).

Disordered regions lie at residues 23 to 103 and 159 to 182; these read AGGG…GVAG and VMES…GSNL. Residues 47-77 show a composition bias toward gly residues; sequence PAGGGYPPQGYPPAGGGYPPQGYPPAGGGYP. Residues 82-94 are compositionally biased toward low complexity; that stretch reads PPAGHHSGSSAPH. The segment covering 163-175 has biased composition (basic and acidic residues); that stretch reads LSRESTGRARSTD.

The polypeptide is Glycine-rich protein A3 (Daucus carota (Wild carrot)).